Here is a 111-residue protein sequence, read N- to C-terminus: uncharacterized protein (111 aa).

G2 is lipidated: N-myristoyl glycine; by host.

This is an uncharacterized protein from Acanthamoeba polyphaga mimivirus (APMV).